The following is a 396-amino-acid chain: Zinc metalloproteinase nas-19 (396 aa).

Residues 1–20 (MVRLIHLIGAIILLFSYAYC) form the signal peptide. A Peptidase M12A domain is found at 38-231 (RVKRQFERLG…YKINQYYGCW (194 aa)). N-linked (GlcNAc...) asparagine glycosylation is present at Asn-79. 4 cysteine pairs are disulfide-bonded: Cys-82-Cys-230, Cys-105-Cys-130, Cys-232-Cys-252, and Cys-254-Cys-263. His-138 provides a ligand contact to Zn(2+). Glu-139 is a catalytic residue. 2 residues coordinate Zn(2+): His-142 and His-148. Residues 225–264 (NQYYGCWCSKQLECKNGGYTSPSDCSRCNCPKGFFGNLCD) form the EGF-like domain. The N-linked (GlcNAc...) asparagine glycan is linked to Asn-310.

The cofactor is Zn(2+).

It is found in the secreted. Metalloprotease. The protein is Zinc metalloproteinase nas-19 (nas-19) of Caenorhabditis elegans.